A 161-amino-acid chain; its full sequence is Large ribosomal subunit protein uL15 (161 aa).

Residues 1–10 (MKLNELRDNP) are compositionally biased toward basic and acidic residues. Residues 1–42 (MKLNELRDNPGARPKSKRLGRGIGSGKGKTSGKGVKGQKARE) form a disordered region. Over residues 21 to 35 (RGIGSGKGKTSGKGV) the composition is skewed to gly residues.

Belongs to the universal ribosomal protein uL15 family. Part of the 50S ribosomal subunit.

In terms of biological role, binds to the 23S rRNA. This chain is Large ribosomal subunit protein uL15, found in Acidiphilium cryptum (strain JF-5).